Here is an 84-residue protein sequence, read N- to C-terminus: Small ribosomal subunit protein bS20 (84 aa).

Belongs to the bacterial ribosomal protein bS20 family.

Binds directly to 16S ribosomal RNA. The chain is Small ribosomal subunit protein bS20 from Parabacteroides distasonis (strain ATCC 8503 / DSM 20701 / CIP 104284 / JCM 5825 / NCTC 11152).